The primary structure comprises 431 residues: Adenylosuccinate synthetase (431 aa).

GTP contacts are provided by residues Gly13–Lys19 and Gly41–Thr43. Asp14 (proton acceptor) is an active-site residue. Mg(2+)-binding residues include Asp14 and Gly41. IMP-binding positions include Asp14–Lys17, Asn39–His42, Thr130, Arg144, Gln225, Thr240, and Arg304. His42 acts as the Proton donor in catalysis. Ala300–Arg306 contacts substrate. GTP is bound by residues Arg306, Lys332–Asp334, and Ser415–Gly417.

Belongs to the adenylosuccinate synthetase family. Homodimer. It depends on Mg(2+) as a cofactor.

The protein localises to the cytoplasm. The catalysed reaction is IMP + L-aspartate + GTP = N(6)-(1,2-dicarboxyethyl)-AMP + GDP + phosphate + 2 H(+). Its pathway is purine metabolism; AMP biosynthesis via de novo pathway; AMP from IMP: step 1/2. Plays an important role in the de novo pathway of purine nucleotide biosynthesis. Catalyzes the first committed step in the biosynthesis of AMP from IMP. The sequence is that of Adenylosuccinate synthetase from Shewanella amazonensis (strain ATCC BAA-1098 / SB2B).